Consider the following 1244-residue polypeptide: Structural polyprotein (1244 aa).

The interval 1–113 is disordered; sequence MNSVFYNPFG…GKRQRTALKF (113 aa). Residues 35 to 44 show a composition bias toward polar residues; it reads GLTTQIQQLT. Residues 35 to 69 form a host transcription inhibition region; sequence GLTTQIQQLTRAVRALVLDNATRRQRPAPRTRPRK. A compositionally biased stretch (basic residues) spans 57–81; that stretch reads RRQRPAPRTRPRKPKTQKPKPKKQN. Residues 62–103 carry the Nuclear localization signal motif; that stretch reads APRTRPRKPKTQKPKPKKQNQKPPQQQKKGKNQPQQPKKPKP. Over residues 82-97 the composition is skewed to low complexity; it reads QKPPQQQKKGKNQPQQ. Residues 85 to 118 form a binding to the viral RNA region; sequence PQQQKKGKNQPQQPKKPKPGKRQRTALKFEADRT. The segment covering 99–109 has biased composition (basic residues); that stretch reads KKPKPGKRQRT. The ribosome-binding stretch occupies residues 103 to 117; that stretch reads PGKRQRTALKFEADR. A Peptidase S3 domain is found at 117–267; it reads RTFVGKNEDG…KTTHEDTVEW (151 aa). The active-site Charge relay system is H144. The short motif at 149 to 159 is the Nuclear export signal element; that stretch reads IDHPALAKLKF. The tract at residues 160-165 is interaction with spike glycoprotein E2; the sequence is TKSSSY. D166 acts as the Charge relay system in catalysis. A dimerization of the capsid protein region spans residues 188–198; the sequence is PEVFYNWHHGA. The active-site Charge relay system is the S218. Positions 224-228 are dimerization of the capsid protein; it reads DNSGK. Residues 252–256 form an interaction with spike glycoprotein E2 region; the sequence is KKGAA. The tract at residues 268–280 is functions as an uncleaved signal peptide for the precursor of protein E3/E2; the sequence is SRAITAMCILQNV. Topologically, residues 268-696 are extracellular; that stretch reads SRAITAMCIL…HYYHLYPFYT (429 aa). N279 carries an N-linked (GlcNAc...) asparagine; by host glycan. Intrachain disulfides connect C284–C290, C481–C595, C530–C555, and C532–C549. N525 carries N-linked (GlcNAc...) asparagine; by host glycosylation. A glycan (N-linked (GlcNAc...) asparagine; by host) is linked at N647. A helical transmembrane segment spans residues 697–717; the sequence is VTVLSGMGLAICAGLVISILC. The Cytoplasmic segment spans residues 718–751; the sequence is CCKARRDCLTPYQLAPNATVPFLVTLCCCFQRTS. An interaction with the capsid protein region spans residues 720–724; sequence KARRD. S-palmitoyl cysteine; by host attachment occurs at residues C725, C745, and C746. C725 and C746 are oxidised to a cystine. Topologically, residues 752–764 are extracellular; it reads ADEFTDTMGYLWQ. Helical transmembrane passes span 765–785 and 786–805; these read HSQT…ITLV and RCCS…NKAD. Over 806–1218 the chain is Extracellular; that stretch reads AYEHTITVPN…KTSWNWITAL (413 aa). 4 disulfides stabilise this stretch: C855-C920, C868-C900, C869-C902, and C874-C884. Positions 890–907 are E1 fusion peptide loop; that stretch reads VYPFLWGGAQCFCDSENS. N-linked (GlcNAc...) asparagine; by host glycans are attached at residues N945 and N1051. Disulfide bonds link C1065-C1077, C1106-C1181, C1111-C1185, and C1133-C1175. A helical membrane pass occupies residues 1219–1239; that stretch reads MGGISSIAAIAAIVLVIALVF. Residues 1240-1244 are Cytoplasmic-facing; that stretch reads TAQHR.

In terms of assembly, homodimer. Homomultimer. Interacts with host karyopherin KPNA4; this interaction allows the nuclear import of the viral capsid protein. Interacts with spike glycoprotein E2. Interacts with host IRAK1; the interaction leads to inhibition of IRAK1-dependent signaling. As to quaternary structure, the precursor of protein E3/E2 and E1 form a heterodimer shortly after synthesis. The precursor of protein E3/E2 and E1 form a heterodimer shortly after synthesis. Processing of the precursor of protein E3/E2 into E2 and E3 results in a heterodimer of the spike glycoproteins E2 and E1. Spike at virion surface are constituted of a trimer of E2-E1 heterodimers. After target cell attachment and endocytosis, E1 change conformation to form homotrimers. Interacts with 6K protein. In terms of assembly, interacts with spike glycoprotein E1. Processing of the precursor of protein E3/E2 into E2 and E3 results in a heterodimer of the spike glycoproteins E2 and E1. Spike at virion surface are constituted of a trimer of E2-E1 heterodimers. Interacts with 6K protein. As to quaternary structure, oligomer. Interacts with spike glycoprotein E1. Interacts with spike glycoprotein E2. In terms of processing, structural polyprotein: Specific enzymatic cleavages in vivo yield mature proteins. Capsid protein is auto-cleaved during polyprotein translation, unmasking a signal peptide at the N-terminus of the precursor of E3/E2. The remaining polyprotein is then targeted to the host endoplasmic reticulum, where host signal peptidase cleaves it into pE2, 6K and E1 proteins. pE2 is further processed to mature E3 and E2 by host furin in trans-Golgi vesicle. Palmitoylated via thioester bonds. These palmitoylations may induce disruption of the C-terminus transmembrane. This would result in the reorientation of E2 C-terminus from lumenal to cytoplasmic side. Post-translationally, N-glycosylated. In terms of processing, palmitoylated via thioester bonds.

Its subcellular location is the virion. It localises to the host cytoplasm. It is found in the host cell membrane. The protein localises to the host nucleus. The protein resides in the virion membrane. Its subcellular location is the host Golgi apparatus. It localises to the host trans-Golgi network. It is found in the host endoplasmic reticulum. The enzyme catalyses Autocatalytic release of the core protein from the N-terminus of the togavirus structural polyprotein by hydrolysis of a -Trp-|-Ser- bond.. Its function is as follows. Forms an icosahedral capsid with a T=4 symmetry composed of 240 copies of the capsid protein surrounded by a lipid membrane through which penetrate 80 spikes composed of trimers of E1-E2 heterodimers. The capsid protein binds to the viral RNA genome at a site adjacent to a ribosome binding site for viral genome translation following genome release. Possesses a protease activity that results in its autocatalytic cleavage from the nascent structural protein. Following its self-cleavage, the capsid protein transiently associates with ribosomes, and within several minutes the protein binds to viral RNA and rapidly assembles into icosahedric core particles. The resulting nucleocapsid eventually associates with the cytoplasmic domain of the spike glycoprotein E2 at the cell membrane, leading to budding and formation of mature virions. In case of infection, new virions attach to target cells and after clathrin-mediated endocytosis their membrane fuses with the host endosomal membrane. This leads to the release of the nucleocapsid into the cytoplasm, followed by an uncoating event necessary for the genomic RNA to become accessible. The uncoating might be triggered by the interaction of capsid proteins with ribosomes. Binding of ribosomes would release the genomic RNA since the same region is genomic RNA-binding and ribosome-binding. Specifically inhibits interleukin-1 receptor-associated kinase 1/IRAK1-dependent signaling during viral entry, representing a means by which the alphaviruses may evade innate immune detection and activation prior to viral gene expression. In terms of biological role, provides the signal sequence for the translocation of the precursor of protein E3/E2 to the host endoplasmic reticulum. Furin-cleaved E3 remains associated with spike glycoprotein E1 and mediates pH protection of the latter during the transport via the secretory pathway. After virion release from the host cell, the assembly protein E3 is gradually released in the extracellular space. Functionally, plays a role in viral attachment to target host cell, by binding to the cell receptor. Synthesized as a p62 precursor which is processed by furin at the cell membrane just before virion budding, giving rise to E2-E1 heterodimer. The p62-E1 heterodimer is stable, whereas E2-E1 is unstable and dissociate at low pH. p62 is processed at the last step, presumably to avoid E1 fusion activation before its final export to cell surface. E2 C-terminus contains a transitory transmembrane that would be disrupted by palmitoylation, resulting in reorientation of the C-terminal tail from lumenal to cytoplasmic side. This step is critical since E2 C-terminus is involved in budding by interacting with capsid proteins. This release of E2 C-terminus in cytoplasm occurs lately in protein export, and precludes premature assembly of particles at the endoplasmic reticulum membrane. Acts as a viroporin that participates in virus glycoprotein processing and transport to the plasma membrane, cell permeabilization and budding of viral particles. Disrupts the calcium homeostasis of the cell, probably at the endoplasmic reticulum level. This leads to cytoplasmic calcium elevation. Because of its lipophilic properties, the 6K protein is postulated to influence the selection of lipids that interact with the transmembrane domains of the glycoproteins, which, in turn, affects the deformability of the bilayer required for the extreme curvature that occurs as budding proceeds. Present in low amount in virions, about 3% compared to viral glycoproteins. Its function is as follows. Class II viral fusion protein. Fusion activity is inactive as long as E1 is bound to E2 in mature virion. After virus attachment to target cell and endocytosis, acidification of the endosome induce dissociation of E1/E2 heterodimer and concomitant trimerization of the E1 subunits. This E1 trimer is fusion active, and promotes release of viral nucleocapsid in cytoplasm after endosome and viral membrane fusion. Efficient fusion requires the presence of cholesterol and sphingolipid in the target membrane. The chain is Structural polyprotein from Aedes (AURAV).